The primary structure comprises 465 residues: Argininosuccinate lyase (465 aa).

This sequence belongs to the lyase 1 family. Argininosuccinate lyase subfamily.

It is found in the cytoplasm. It catalyses the reaction 2-(N(omega)-L-arginino)succinate = fumarate + L-arginine. It participates in amino-acid biosynthesis; L-arginine biosynthesis; L-arginine from L-ornithine and carbamoyl phosphate: step 3/3. The polypeptide is Argininosuccinate lyase (Variovorax paradoxus (strain S110)).